The chain runs to 1348 residues: Vascular endothelial growth factor receptor 2 (1348 aa).

The signal sequence occupies residues 1–20 (MELGPLRVLTVLLCLAPVFA). The Extracellular portion of the chain corresponds to 21–756 (GLFISMDQPT…GAEEKTNLEL (736 aa)). 20 N-linked (GlcNAc...) asparagine glycosylation sites follow: Asn43, Asn47, Asn63, Asn93, Asn138, Asn153, Asn201, Asn240, Asn290, Asn310, Asn365, Asn386, Asn513, Asn556, Asn603, Asn613, Asn622, Asn666, Asn688, and Asn710. Ig-like C2-type domains are found at residues 43–106 (NDTL…GDSQ), 138–202 (NKTV…IDNE), 220–312 (DLTM…KNSS), 320–405 (PFIH…HTFT), 412–534 (PQIG…RVIS), 540–651 (GLEI…KHLT), and 658–744 (PRLV…AFFS). Residues Cys50 and Cys100 are joined by a disulfide bond. Cys145 and Cys195 form a disulfide bridge. Cys241 and Cys299 are oxidised to a cystine. A disulfide bond links Cys436 and Cys520. Residues Cys561 and Cys633 are joined by a disulfide bond. A disulfide bridge links Cys679 with Cys728. The helical transmembrane segment at 757 to 777 (IILVGTAVIAMFFWLLLVIIL) threads the bilayer. Over 778–1348 (RTVKRANGGD…SPAPVASLPL (571 aa)) the chain is Cytoplasmic. Residues 825–1155 (LKLGKPLGRG…FSELVEHLGN (331 aa)) form the Protein kinase domain. ATP contacts are provided by residues 831–839 (LGRGAFGQV) and Lys859. Residues 958-967 (ITSSQSSTSS) are compositionally biased toward low complexity. The interval 958 to 983 (ITSSQSSTSSGFVEERSLSDVEEEDA) is disordered. Asp1021 serves as the catalytic Proton acceptor. Residues Tyr1047, Tyr1052, Tyr1168, and Tyr1207 each carry the phosphotyrosine; by autocatalysis modification. A disordered region spans residues 1280–1302 (PSKSNESVMSEASNQTSGYQSGY).

It belongs to the protein kinase superfamily. Tyr protein kinase family. CSF-1/PDGF receptor subfamily. Autophosphorylated on tyrosine residues upon ligand binding. Autophosphorylation occurs in trans, i.e. one subunit of the dimeric receptor phosphorylates tyrosine residues on the other subunit. As to expression, in all endothelial tissues during onset of vascularization. In later development, present in lung, heart, intestine and skin.

It is found in the cell membrane. Its subcellular location is the cytoplasmic vesicle. It localises to the early endosome. The protein resides in the cell junction. The protein localises to the endoplasmic reticulum. It catalyses the reaction L-tyrosyl-[protein] + ATP = O-phospho-L-tyrosyl-[protein] + ADP + H(+). Present in an inactive conformation in the absence of bound ligand. Binding of VEGFA, VEGFC or VEGFD leads to dimerization and activation by autophosphorylation on tyrosine residues. Functionally, tyrosine-protein kinase that acts as a cell-surface receptor for VEGFA, VEGFC and/or VEGFD and plays an essential role in the regulation of angiogenesis and vascular development. Promotes proliferation, survival, migration and differentiation of endothelial cells. Promotes reorganization of the actin cytoskeleton. Binding of vascular growth factors leads to the activation of several signaling cascades. Activation of PLCG1 leads to the production of the cellular signaling molecules diacylglycerol and inositol 1,4,5-trisphosphate and the activation of protein kinase C. Mediates activation of MAPK1/ERK2, MAPK3/ERK1 and the MAP kinase signaling pathway, as well as of the AKT1 signaling pathway. Mediates phosphorylation of PIK3R1, the regulatory subunit of phosphatidylinositol 3-kinase, reorganization of the actin cytoskeleton and activation of PTK2/FAK1. Required for VEGFA-mediated induction of NOS2 and NOS3, leading to the production of the signaling molecule nitric oxide (NO) by endothelial cells. This chain is Vascular endothelial growth factor receptor 2, found in Coturnix japonica (Japanese quail).